The following is a 319-amino-acid chain: ATP-dependent 6-phosphofructokinase (319 aa).

Gly-11 is an ATP binding site. An ADP-binding site is contributed by Arg-21–Arg-25. Residues Arg-72–Cys-73 and Gly-102–Ser-105 each bind ATP. Asp-103 contacts Mg(2+). Thr-125–Asp-127 serves as a coordination point for substrate. The active-site Proton acceptor is Asp-127. ADP is bound at residue Arg-154. Residues Arg-162 and Met-169–Arg-171 each bind substrate. Residues Gly-185–Glu-187, Arg-211, and Lys-213–His-215 contribute to the ADP site. Residues Glu-222, Lys-243, and His-249–Arg-252 each bind substrate.

This sequence belongs to the phosphofructokinase type A (PFKA) family. ATP-dependent PFK group I subfamily. Prokaryotic clade 'B1' sub-subfamily. Homotetramer. The cofactor is Mg(2+).

Its subcellular location is the cytoplasm. It catalyses the reaction beta-D-fructose 6-phosphate + ATP = beta-D-fructose 1,6-bisphosphate + ADP + H(+). It participates in carbohydrate degradation; glycolysis; D-glyceraldehyde 3-phosphate and glycerone phosphate from D-glucose: step 3/4. Allosterically activated by ADP and other diphosphonucleosides, and allosterically inhibited by phosphoenolpyruvate. Its function is as follows. Catalyzes the phosphorylation of D-fructose 6-phosphate to fructose 1,6-bisphosphate by ATP, the first committing step of glycolysis. The polypeptide is ATP-dependent 6-phosphofructokinase (Finegoldia magna (strain ATCC 29328 / DSM 20472 / WAL 2508) (Peptostreptococcus magnus)).